Consider the following 666-residue polypeptide: Translation factor guf1, mitochondrial (666 aa).

Residues 1–44 (MRGCLQLGRWLSAAPRCQAASLRPPTVFPSYRYNRSFSTTTIYY) constitute a mitochondrion transit peptide. A tr-type G domain is found at 68–248 (ERFRNFCIVA…TVVEKVPAPI (181 aa)). Residues 77 to 84 (AHVDHGKS), 141 to 145 (DTPGH), and 195 to 198 (NKVD) each bind GTP.

It belongs to the TRAFAC class translation factor GTPase superfamily. Classic translation factor GTPase family. LepA subfamily.

It localises to the mitochondrion inner membrane. It carries out the reaction GTP + H2O = GDP + phosphate + H(+). Promotes mitochondrial protein synthesis. May act as a fidelity factor of the translation reaction, by catalyzing a one-codon backward translocation of tRNAs on improperly translocated ribosomes. Binds to mitochondrial ribosomes in a GTP-dependent manner. The polypeptide is Translation factor guf1, mitochondrial (guf1) (Penicillium rubens (strain ATCC 28089 / DSM 1075 / NRRL 1951 / Wisconsin 54-1255) (Penicillium chrysogenum)).